Consider the following 194-residue polypeptide: Cysteine and glycine-rich protein 3 (194 aa).

An interaction with TCAP region spans residues 1 to 5 (MPNWG). The LIM zinc-binding 1 domain occupies 10-61 (CGACEKTVYHAEEIQCNGRSFHKTCFHCMACRKALDSTTVAAHESEIYCKVC). A Nuclear localization signal motif is present at residues 64–69 (RRYGPK). Positions 94-106 (QSPKQARSATTSS) are interaction with CLF2. Phosphoserine is present on residues Ser95 and Ser153. Positions 120 to 171 (CPRCGKSVYAAEKVMGGGKPWHKTCFRCAICGKSLESTNVTDKDGELYCKVC) constitute an LIM zinc-binding 2 domain.

Self-associates. Oligomeric in the cytoplasm and monomeric in the nucleus. Homooligomers preferentially form along the actin cytoskeleton. Interacts with TCAP, LDHD, MYOD1, MYOG, ACTN2, NRAP, MYF6. Interacts (via N-terminus) with GLRX3 (via C-terminus) and PPP3CA; GLRX3 and calcineurin compete for interaction with CSRP3. Interacts with CFL2; the stoichiometry influences F-actin depolymerization and possibly two molecules of CFL2 can interact with one molecule of CSRP3 resulting in the highest functional impact; the interaction is stronger with phosphorylated CFL2.

The protein resides in the nucleus. Its subcellular location is the cytoplasm. It localises to the cytoskeleton. The protein localises to the myofibril. It is found in the sarcomere. The protein resides in the z line. In terms of biological role, positive regulator of myogenesis. Acts as a cofactor for myogenic bHLH transcription factors such as MYOD1, and probably MYOG and MYF6. Enhances the DNA-binding activity of the MYOD1:TCF3 isoform E47 complex and may promote formation of a functional MYOD1:TCF3 isoform E47:MEF2A complex involved in myogenesis. Plays a crucial and specific role in the organization of cytosolic structures in cardiomyocytes. Could play a role in mechanical stretch sensing. May be a scaffold protein that promotes the assembly of interacting proteins at Z-line structures. It is essential for calcineurin anchorage to the Z line. Required for stress-induced calcineurin-NFAT activation. The role in regulation of cytoskeleton dynamics by association with CFL2 is reported conflictingly. Proposed to contribute to the maintenance of muscle cell integrity through an actin-based mechanism. Can directly bind to actin filaments, cross-link actin filaments into bundles without polarity selectivity and protect them from dilution- and cofilin-mediated depolymerization; the function seems to involve its self-association. In vitro can inhibit PKC/PRKCA activity. Proposed to be involved in cardiac stress signaling by down-regulating excessive PKC/PRKCA signaling. The sequence is that of Cysteine and glycine-rich protein 3 (CSRP3) from Bos taurus (Bovine).